We begin with the raw amino-acid sequence, 201 residues long: Large ribosomal subunit protein bL25 (201 aa).

The disordered stretch occupies residues 181–201 (APRESEEEAEEEATETAKESE). Residues 185–194 (SEEEAEEEAT) are compositionally biased toward acidic residues.

This sequence belongs to the bacterial ribosomal protein bL25 family. CTC subfamily. Part of the 50S ribosomal subunit; part of the 5S rRNA/L5/L18/L25 subcomplex. Contacts the 5S rRNA. Binds to the 5S rRNA independently of L5 and L18.

This is one of the proteins that binds to the 5S RNA in the ribosome where it forms part of the central protuberance. This chain is Large ribosomal subunit protein bL25, found in Thermoanaerobacter pseudethanolicus (strain ATCC 33223 / 39E) (Clostridium thermohydrosulfuricum).